Consider the following 358-residue polypeptide: Pyruvate dehydrogenase E1 component subunit alpha (358 aa).

As to quaternary structure, heterodimer of an alpha and a beta chain. Requires thiamine diphosphate as cofactor.

The enzyme catalyses N(6)-[(R)-lipoyl]-L-lysyl-[protein] + pyruvate + H(+) = N(6)-[(R)-S(8)-acetyldihydrolipoyl]-L-lysyl-[protein] + CO2. In terms of biological role, the pyruvate dehydrogenase complex catalyzes the overall conversion of pyruvate to acetyl-CoA and CO(2). It contains multiple copies of three enzymatic components: pyruvate dehydrogenase (E1), dihydrolipoamide acetyltransferase (E2) and lipoamide dehydrogenase (E3). The sequence is that of Pyruvate dehydrogenase E1 component subunit alpha (pdhA) from Mycoplasma pneumoniae (strain ATCC 29342 / M129 / Subtype 1) (Mycoplasmoides pneumoniae).